A 289-amino-acid chain; its full sequence is MKLSFTKMHGAGNDFVVLDGYTRALPPLTGAQVRALADRHFGIGADQLLLVEKPTVDGADFKYRIFNCDGGEVEHCGNGARCFVKFVRDHGLTGKASVRVEVKHGVITLTMQDNGEVVVDMGAPVFEPARVPFDASGLDGRREGADTLWPLPVNGVTRWISVVSMGNPHAVQIVDDAEAFAVRVDGPAIECDPRFPQRVNAGFMQIVSRHEVNLRVYERGAGETLACGTGACAAVAAGIRRGRLDSPVTVHTHGGTLTISWNGACDERAPLMMAGPATTVFEGVIELPA.

Substrate-binding residues include Asn13, Gln47, and Asn67. Cys76 serves as the catalytic Proton donor. Substrate-binding positions include 77-78 (GN), Asn167, Asn200, and 218-219 (ER). Residue Cys227 is the Proton acceptor of the active site. 228–229 (GT) serves as a coordination point for substrate.

This sequence belongs to the diaminopimelate epimerase family. In terms of assembly, homodimer.

Its subcellular location is the cytoplasm. It carries out the reaction (2S,6S)-2,6-diaminopimelate = meso-2,6-diaminopimelate. It participates in amino-acid biosynthesis; L-lysine biosynthesis via DAP pathway; DL-2,6-diaminopimelate from LL-2,6-diaminopimelate: step 1/1. Functionally, catalyzes the stereoinversion of LL-2,6-diaminopimelate (L,L-DAP) to meso-diaminopimelate (meso-DAP), a precursor of L-lysine and an essential component of the bacterial peptidoglycan. The chain is Diaminopimelate epimerase from Burkholderia pseudomallei (strain K96243).